The chain runs to 443 residues: ATP-dependent protease ATPase subunit HslU (443 aa).

Residues Ile18, Gly60–Glu65, Asp256, Glu321, and Arg393 contribute to the ATP site.

This sequence belongs to the ClpX chaperone family. HslU subfamily. In terms of assembly, a double ring-shaped homohexamer of HslV is capped on each side by a ring-shaped HslU homohexamer. The assembly of the HslU/HslV complex is dependent on binding of ATP.

The protein resides in the cytoplasm. Functionally, ATPase subunit of a proteasome-like degradation complex; this subunit has chaperone activity. The binding of ATP and its subsequent hydrolysis by HslU are essential for unfolding of protein substrates subsequently hydrolyzed by HslV. HslU recognizes the N-terminal part of its protein substrates and unfolds these before they are guided to HslV for hydrolysis. The polypeptide is ATP-dependent protease ATPase subunit HslU (Photorhabdus laumondii subsp. laumondii (strain DSM 15139 / CIP 105565 / TT01) (Photorhabdus luminescens subsp. laumondii)).